The primary structure comprises 127 residues: LIM domain-containing protein 2 (127 aa).

Methionine 1 is modified (N-acetylmethionine). Residues methionine 1 to valine 24 form a disordered region. The 61-residue stretch at glutamate 38–serine 98 folds into the LIM zinc-binding domain. Residues cysteine 40, cysteine 43, histidine 61, cysteine 64, cysteine 67, cysteine 70, cysteine 88, and histidine 91 each coordinate Zn(2+).

Interacts with ILK.

It localises to the cytoplasm. The protein resides in the nucleus. Functionally, acts as an activator of the protein-kinase ILK, thereby regulating cell motility. The polypeptide is LIM domain-containing protein 2 (Homo sapiens (Human)).